Consider the following 469-residue polypeptide: ATP-dependent protease ATPase subunit HslU (469 aa).

Residues isoleucine 24 and 66-71 (GVGKTE) each bind ATP. Positions 159–179 (LFGSMNQPDEPAEEEVDQELK) are disordered. The ATP site is built by aspartate 282, glutamate 347, and arginine 419.

This sequence belongs to the ClpX chaperone family. HslU subfamily. In terms of assembly, a double ring-shaped homohexamer of HslV is capped on each side by a ring-shaped HslU homohexamer. The assembly of the HslU/HslV complex is dependent on binding of ATP.

The protein resides in the cytoplasm. Functionally, ATPase subunit of a proteasome-like degradation complex; this subunit has chaperone activity. The binding of ATP and its subsequent hydrolysis by HslU are essential for unfolding of protein substrates subsequently hydrolyzed by HslV. HslU recognizes the N-terminal part of its protein substrates and unfolds these before they are guided to HslV for hydrolysis. The sequence is that of ATP-dependent protease ATPase subunit HslU from Listeria innocua serovar 6a (strain ATCC BAA-680 / CLIP 11262).